Here is a 63-residue protein sequence, read N- to C-terminus: Large ribosomal subunit protein bL33m (63 aa).

The protein belongs to the bacterial ribosomal protein bL33 family.

It localises to the mitochondrion. The polypeptide is Large ribosomal subunit protein bL33m (mrpl33) (Dictyostelium discoideum (Social amoeba)).